The following is a 474-amino-acid chain: tRNA-2-methylthio-N(6)-dimethylallyladenosine synthase (474 aa).

Positions 3-120 constitute an MTTase N-terminal domain; it reads KKLHIKTWGC…LPEMINSVRG (118 aa). [4Fe-4S] cluster contacts are provided by C12, C49, C83, C157, C161, and C164. The 233-residue stretch at 143 to 375 folds into the Radical SAM core domain; that stretch reads RADGPTAFVS…QDRINQQTTA (233 aa). One can recognise a TRAM domain in the interval 378 to 441; the sequence is RRKLGTVQRI…ANSLRGMLLR (64 aa).

It belongs to the methylthiotransferase family. MiaB subfamily. As to quaternary structure, monomer. [4Fe-4S] cluster serves as cofactor.

The protein resides in the cytoplasm. The catalysed reaction is N(6)-dimethylallyladenosine(37) in tRNA + (sulfur carrier)-SH + AH2 + 2 S-adenosyl-L-methionine = 2-methylsulfanyl-N(6)-dimethylallyladenosine(37) in tRNA + (sulfur carrier)-H + 5'-deoxyadenosine + L-methionine + A + S-adenosyl-L-homocysteine + 2 H(+). Its function is as follows. Catalyzes the methylthiolation of N6-(dimethylallyl)adenosine (i(6)A), leading to the formation of 2-methylthio-N6-(dimethylallyl)adenosine (ms(2)i(6)A) at position 37 in tRNAs that read codons beginning with uridine. In Erwinia tasmaniensis (strain DSM 17950 / CFBP 7177 / CIP 109463 / NCPPB 4357 / Et1/99), this protein is tRNA-2-methylthio-N(6)-dimethylallyladenosine synthase.